The chain runs to 177 residues: Flavodoxin (177 aa).

The Flavodoxin-like domain occupies 4 to 173 (IGIFFGSDTG…RIDTWLDKLK (170 aa)).

Belongs to the flavodoxin family. FMN is required as a cofactor.

Its function is as follows. Low-potential electron donor to a number of redox enzymes. NifF is the electron donor to nitrogenase. This Enterobacter agglomerans (Erwinia herbicola) protein is Flavodoxin (nifF).